We begin with the raw amino-acid sequence, 57 residues long: uncharacterized protein (57 aa).

The segment at 1–57 is disordered; that stretch reads MDDTLPKQMTPTDTSPLKEEQAHCNNKTLENQPKNINDNKCTDSQNTDLQNTEPSKV. Positions 23 to 57 are enriched in polar residues; the sequence is HCNNKTLENQPKNINDNKCTDSQNTDLQNTEPSKV.

This is an uncharacterized protein from Ornithodoros (relapsing fever ticks).